The following is a 357-amino-acid chain: Sulfate/thiosulfate import ATP-binding protein CysA (357 aa).

In terms of domain architecture, ABC transporter spans 3–237 (IQIQGVSKQY…PASPFVYDFL (235 aa)). ATP is bound at residue 35–42 (GPSGSGKT).

It belongs to the ABC transporter superfamily. Sulfate/tungstate importer (TC 3.A.1.6) family. In terms of assembly, the complex is composed of two ATP-binding proteins (CysA), two transmembrane proteins (CysT and CysW) and a solute-binding protein (CysP).

It localises to the cell membrane. It carries out the reaction sulfate(out) + ATP + H2O = sulfate(in) + ADP + phosphate + H(+). The catalysed reaction is thiosulfate(out) + ATP + H2O = thiosulfate(in) + ADP + phosphate + H(+). Part of the ABC transporter complex CysAWTP involved in sulfate/thiosulfate import. Responsible for energy coupling to the transport system. This is Sulfate/thiosulfate import ATP-binding protein CysA from Bacillus cereus (strain ATCC 10987 / NRS 248).